The sequence spans 180 residues: Cytokinin-beta-glucosidase 2 (180 aa).

Functionally, hydrolyzes cytokinin glucosides thus liberating free cytokinins. The sequence is that of Cytokinin-beta-glucosidase 2 (ROLC2) from Panax ginseng (Korean ginseng).